Reading from the N-terminus, the 277-residue chain is Undecaprenyl-diphosphatase (277 aa).

A run of 7 helical transmembrane segments spans residues 3-23 (YIIE…TEIF), 48-68 (LTLF…IYYF), 97-117 (ISYA…GLLI), 125-145 (LLSI…VFLL), 198-218 (SFLC…YDAI), 227-247 (IPGF…TIKI), and 257-277 (LIWF…LYII).

The protein belongs to the UppP family.

It localises to the cell membrane. The catalysed reaction is di-trans,octa-cis-undecaprenyl diphosphate + H2O = di-trans,octa-cis-undecaprenyl phosphate + phosphate + H(+). Functionally, catalyzes the dephosphorylation of undecaprenyl diphosphate (UPP). Confers resistance to bacitracin. This chain is Undecaprenyl-diphosphatase, found in Acholeplasma laidlawii (strain PG-8A).